The following is a 65-amino-acid chain: DNA-directed RNA polymerase subunit Rpo10 (65 aa).

The Zn(2+) site is built by Cys-7, Cys-10, Cys-44, and Cys-45.

Belongs to the archaeal Rpo10/eukaryotic RPB10 RNA polymerase subunit family. As to quaternary structure, part of the RNA polymerase complex. Requires Zn(2+) as cofactor.

It is found in the cytoplasm. The catalysed reaction is RNA(n) + a ribonucleoside 5'-triphosphate = RNA(n+1) + diphosphate. In terms of biological role, DNA-dependent RNA polymerase (RNAP) catalyzes the transcription of DNA into RNA using the four ribonucleoside triphosphates as substrates. The chain is DNA-directed RNA polymerase subunit Rpo10 from Pyrococcus furiosus (strain ATCC 43587 / DSM 3638 / JCM 8422 / Vc1).